The primary structure comprises 195 residues: 3-isopropylmalate dehydratase small subunit (195 aa).

The protein belongs to the LeuD family. LeuD type 1 subfamily. As to quaternary structure, heterodimer of LeuC and LeuD.

It carries out the reaction (2R,3S)-3-isopropylmalate = (2S)-2-isopropylmalate. The protein operates within amino-acid biosynthesis; L-leucine biosynthesis; L-leucine from 3-methyl-2-oxobutanoate: step 2/4. Functionally, catalyzes the isomerization between 2-isopropylmalate and 3-isopropylmalate, via the formation of 2-isopropylmaleate. This is 3-isopropylmalate dehydratase small subunit from Oenococcus oeni (strain ATCC BAA-331 / PSU-1).